A 100-amino-acid polypeptide reads, in one-letter code: Large ribosomal subunit protein uL23 (100 aa).

The protein belongs to the universal ribosomal protein uL23 family. As to quaternary structure, part of the 50S ribosomal subunit. Contacts protein L29, and trigger factor when it is bound to the ribosome.

Functionally, one of the early assembly proteins it binds 23S rRNA. One of the proteins that surrounds the polypeptide exit tunnel on the outside of the ribosome. Forms the main docking site for trigger factor binding to the ribosome. The sequence is that of Large ribosomal subunit protein uL23 from Synechococcus sp. (strain RCC307).